Here is a 338-residue protein sequence, read N- to C-terminus: tRNA N6-adenosine threonylcarbamoyltransferase (338 aa).

The Fe cation site is built by histidine 111 and histidine 115. Residues 134 to 138, aspartate 167, glycine 180, and asparagine 272 each bind substrate; that span reads LVSGG. Position 300 (aspartate 300) interacts with Fe cation.

This sequence belongs to the KAE1 / TsaD family. Fe(2+) is required as a cofactor.

The protein localises to the cytoplasm. The enzyme catalyses L-threonylcarbamoyladenylate + adenosine(37) in tRNA = N(6)-L-threonylcarbamoyladenosine(37) in tRNA + AMP + H(+). In terms of biological role, required for the formation of a threonylcarbamoyl group on adenosine at position 37 (t(6)A37) in tRNAs that read codons beginning with adenine. Is involved in the transfer of the threonylcarbamoyl moiety of threonylcarbamoyl-AMP (TC-AMP) to the N6 group of A37, together with TsaE and TsaB. TsaD likely plays a direct catalytic role in this reaction. In Nitrosomonas eutropha (strain DSM 101675 / C91 / Nm57), this protein is tRNA N6-adenosine threonylcarbamoyltransferase.